A 381-amino-acid chain; its full sequence is DNA replication and repair protein RecF (381 aa).

30-37 is a binding site for ATP; the sequence is GENAQGKT.

The protein belongs to the RecF family.

It localises to the cytoplasm. Functionally, the RecF protein is involved in DNA metabolism; it is required for DNA replication and normal SOS inducibility. RecF binds preferentially to single-stranded, linear DNA. It also seems to bind ATP. The chain is DNA replication and repair protein RecF from Lactobacillus delbrueckii subsp. bulgaricus (strain ATCC 11842 / DSM 20081 / BCRC 10696 / JCM 1002 / NBRC 13953 / NCIMB 11778 / NCTC 12712 / WDCM 00102 / Lb 14).